A 446-amino-acid polypeptide reads, in one-letter code: Phosphoglucosamine mutase (446 aa).

Ser101 acts as the Phosphoserine intermediate in catalysis. Residues Ser101, Asp240, Asp242, and Asp244 each contribute to the Mg(2+) site. A Phosphoserine modification is found at Ser101.

This sequence belongs to the phosphohexose mutase family. The cofactor is Mg(2+). Activated by phosphorylation.

It carries out the reaction alpha-D-glucosamine 1-phosphate = D-glucosamine 6-phosphate. In terms of biological role, catalyzes the conversion of glucosamine-6-phosphate to glucosamine-1-phosphate. This chain is Phosphoglucosamine mutase, found in Pseudomonas putida (strain W619).